Here is a 67-residue protein sequence, read N- to C-terminus: Copper transport protein ATOX1 homolog (67 aa).

Positions 1-64 constitute an HMA domain; sequence MTYSFFVDMT…NIQKTGKKCS (64 aa). Residues cysteine 11 and cysteine 14 each coordinate Cu cation.

Belongs to the ATX1 family.

In terms of biological role, could bind and deliver cytosolic copper to the copper ATPase proteins. May be important in cellular antioxidant defense. This Dictyostelium discoideum (Social amoeba) protein is Copper transport protein ATOX1 homolog (atox1).